A 1370-amino-acid chain; its full sequence is Putative surface protein SA2285 (1370 aa).

Residues 1–50 form the signal peptide; the sequence is MRDKKGPVNKRVDFLSNKLNKYSIRKFTVGTASILIGSLMYLGTQQEAEA. Disordered regions lie at residues 77–116, 439–472, and 495–1344; these read NKDT…EDTP, KFNP…NPLT, and EYGP…TGLE. Basic and acidic residues-rich tracts occupy residues 96–116, 450–460, 504–522, 553–569, 578–588, 605–618, 632–650, 681–697, 706–716, 733–746, 760–778, 809–825, 834–844, 861–874, 888–906, 937–953, 962–972, 989–1002, 1016–1034, 1065–1081, 1090–1100, 1117–1130, 1174–1185, and 1202–1221; these read DTIE…EDTP, KVTREGQKGEK, GHRD…EEVP, SIVE…RKFN, SKGE…KDPI, SKGE…KDPV, KVIEEPVDDVIK, and FETK…RVKQ. Positions 418-500 constitute a G5 1 domain; it reads SAKNNNRIRK…NELTEYGPET (83 aa). The G5 2 domain maps to 546–628; that stretch reads YGPVKGDSIV…NELTEYGPET (83 aa). Residues 674–756 enclose the G5 3 domain; sequence YGPVKGDSIV…NELTEYGPET (83 aa). A G5 4 domain is found at 802-884; that stretch reads YGPVKGDSIV…NELTEYGPET (83 aa). The G5 5 domain maps to 930 to 1012; it reads YGPVKGDSIV…NELTEYGPET (83 aa). The 83-residue stretch at 1058–1140 folds into the G5 6 domain; it reads YGPVKGDSIV…NELTEFGGEK (83 aa). Residues 1186-1268 form the G5 7 domain; that stretch reads HGPKTGTPET…DKIVEFGGEK (83 aa). A compositionally biased stretch (polar residues) spans 1224-1238; the sequence is QPGSKTITTPITVNP. Over residues 1252-1282 the composition is skewed to basic and acidic residues; the sequence is EITKQPVDKIVEFGGEKPKDPKGPENPEKPS. The LPXTG sorting signal signature appears at 1338–1342; sequence LPKTG. The residue at position 1341 (threonine 1341) is a Pentaglycyl murein peptidoglycan amidated threonine. Residues 1342-1370 constitute a propeptide, removed by sortase; sequence GLESTQKGLIFSSIIGIAGLMLLARRRKN.

The protein localises to the secreted. It is found in the cell wall. This chain is Putative surface protein SA2285, found in Staphylococcus aureus (strain N315).